Reading from the N-terminus, the 698-residue chain is UvrABC system protein B (698 aa).

The Helicase ATP-binding domain occupies 25-183; it reads NGLNSGLVHQ…TLIDLQFERN (159 aa). ATP is bound at residue 38 to 45; that stretch reads GATGTGKT. A Beta-hairpin motif is present at residues 91-114; sequence YYDAYTPEAYVPSKDLYIEKEAQI. The Helicase C-terminal domain maps to 428-594; sequence QIDDLLGEIK…GIVKAVRDLT (167 aa). Residues 622-657 form the UVR domain; the sequence is FKVINALEKQMKQAAKDLEFEKAALLRDQLTEMRQT.

It belongs to the UvrB family. In terms of assembly, forms a heterotetramer with UvrA during the search for lesions. Interacts with UvrC in an incision complex.

The protein resides in the cytoplasm. Its function is as follows. The UvrABC repair system catalyzes the recognition and processing of DNA lesions. A damage recognition complex composed of 2 UvrA and 2 UvrB subunits scans DNA for abnormalities. Upon binding of the UvrA(2)B(2) complex to a putative damaged site, the DNA wraps around one UvrB monomer. DNA wrap is dependent on ATP binding by UvrB and probably causes local melting of the DNA helix, facilitating insertion of UvrB beta-hairpin between the DNA strands. Then UvrB probes one DNA strand for the presence of a lesion. If a lesion is found the UvrA subunits dissociate and the UvrB-DNA preincision complex is formed. This complex is subsequently bound by UvrC and the second UvrB is released. If no lesion is found, the DNA wraps around the other UvrB subunit that will check the other stand for damage. This Herpetosiphon aurantiacus (strain ATCC 23779 / DSM 785 / 114-95) protein is UvrABC system protein B.